Here is a 277-residue protein sequence, read N- to C-terminus: NH(3)-dependent NAD(+) synthetase (277 aa).

36–43 (GLSGGIDS) serves as a coordination point for ATP. Aspartate 42 lines the Mg(2+) pocket. Arginine 118 contributes to the deamido-NAD(+) binding site. Threonine 138 contributes to the ATP binding site. Residue glutamate 143 coordinates Mg(2+). Residues lysine 167 and serine 189 each contribute to the ATP site.

This sequence belongs to the NAD synthetase family. Homodimer.

The enzyme catalyses deamido-NAD(+) + NH4(+) + ATP = AMP + diphosphate + NAD(+) + H(+). Its pathway is cofactor biosynthesis; NAD(+) biosynthesis; NAD(+) from deamido-NAD(+) (ammonia route): step 1/1. In terms of biological role, catalyzes the ATP-dependent amidation of deamido-NAD to form NAD. Uses ammonia as a nitrogen source. The protein is NH(3)-dependent NAD(+) synthetase of Pelodictyon phaeoclathratiforme (strain DSM 5477 / BU-1).